Consider the following 606-residue polypeptide: Kelch-like protein 41 (606 aa).

Residue Ser-3 is modified to Phosphoserine. The BTB domain occupies 33 to 100; that stretch reads IDCTLKAGDK…LYSASIDLND (68 aa). In terms of domain architecture, BACK spans 135-237; that stretch reads CLAILRLGLL…TEKYFKDHVE (103 aa). 5 Kelch repeats span residues 346–398, 399–447, 448–495, 497–542, and 544–599; these read QIYV…EVDD, KIYV…SHKG, MIYC…VHKG, IVIA…SLAG, and LYAI…TRLN.

Interacts with NRAP. Interacts with LASP1. Part of a complex that contains CUL3, RBX1 and KLHL41. Ubiquitinated by E3 ubiquitin ligase complex formed by CUL3 and RBX1 and probably targeted for proteasome-independent degradation. Quinone-induced oxidative stress increases its ubiquitination. Sarcomeric muscle.

The protein resides in the cytoplasm. It localises to the cytoskeleton. The protein localises to the cell projection. It is found in the pseudopodium. Its subcellular location is the ruffle. The protein resides in the myofibril. It localises to the sarcomere. The protein localises to the m line. It is found in the sarcoplasmic reticulum membrane. Its subcellular location is the endoplasmic reticulum membrane. Functionally, involved in skeletal muscle development and differentiation. Regulates proliferation and differentiation of myoblasts and plays a role in myofibril assembly by promoting lateral fusion of adjacent thin fibrils into mature, wide myofibrils. Required for pseudopod elongation in transformed cells. The polypeptide is Kelch-like protein 41 (KLHL41) (Homo sapiens (Human)).